Consider the following 1671-residue polypeptide: DENN domain-containing protein Crag (1671 aa).

Residues 39-195 (IEPITDIGVY…DVYLCYKKSM (157 aa)) enclose the MABP domain. A uDENN domain is found at 187-364 (VYLCYKKSMY…DEVPFPAPSI (178 aa)). Positions 385 to 521 (PLPRSGAGFH…AARLLRQTLT (137 aa)) constitute a cDENN domain. The 110-residue stretch at 523 to 632 (LENAKPISYD…ERSFVSDGDH (110 aa)) folds into the dDENN domain. 3 disordered regions span residues 997–1160 (QQQQ…PVAS), 1245–1311 (ANST…RLSE), and 1415–1435 (VEESEQSDPLQDGKEQIANGN). Acidic residues-rich tracts occupy residues 1011–1023 (GDDDDEDEDEDEY) and 1050–1061 (YEADEEDEDEVD). Polar residues predominate over residues 1072–1089 (RVQSPTKISPRTPVTQND). Residues 1100–1119 (AASATPTQETQQEQQHSQSQ) show a composition bias toward low complexity. The segment covering 1136-1147 (RSATFDESTQIG) has biased composition (polar residues). Residues 1254–1277 (NGHHPHGLHHGHHHPHHHHHHHSQ) are compositionally biased toward basic residues. Positions 1281 to 1301 (AEQEEHDAAVHEEGKLRRVSS) are enriched in basic and acidic residues.

As to quaternary structure, interacts with Cam. Interacts with Rab10. Interacts (via the DENN domains) with Rab11. Expressed in the adult head and body.

The protein resides in the cytoplasm. Its subcellular location is the cell cortex. The protein localises to the early endosome. It is found in the recycling endosome. It localises to the cytoplasmic granule. Functionally, calmodulin-binding protein that acts as a guanine exchange factor for Rab10 and Rab11. Essential for maintenance of adult photoreceptor cells. Upon light stimulation, required for trafficking of newly synthesized ninaE (Rh1) from the trans-Golgi network to rhabdomere membranes via Rab11-dependent vesicular transport. During egg development, essential for establishing and maintaining epithelial cell polarity by regulating the correct polarized deposition of basal membrane (BM) proteins in follicular epithelial (FE) cells. Functions by targeting Rab10 to the basal cytoplasm, where it restricts the secretion of BM proteins such as trol/Pcan and vkg/Coll IV to the basal surface. Appears to be involved in regulating the levels and distribution of the guanine nucleotide exchange factor strat, however the two proteins appear to have independent roles in regulating polarized BM protein secretion in the FE. The chain is DENN domain-containing protein Crag from Drosophila melanogaster (Fruit fly).